We begin with the raw amino-acid sequence, 282 residues long: 3-methyl-2-oxobutanoate hydroxymethyltransferase (282 aa).

2 residues coordinate Mg(2+): Asp-45 and Asp-84. 3-methyl-2-oxobutanoate-binding positions include 45–46 (DS), Asp-84, and Lys-114. Glu-116 contacts Mg(2+). Glu-183 functions as the Proton acceptor in the catalytic mechanism.

It belongs to the PanB family. As to quaternary structure, homodecamer; pentamer of dimers. The cofactor is Mg(2+).

Its subcellular location is the cytoplasm. The catalysed reaction is 3-methyl-2-oxobutanoate + (6R)-5,10-methylene-5,6,7,8-tetrahydrofolate + H2O = 2-dehydropantoate + (6S)-5,6,7,8-tetrahydrofolate. The protein operates within cofactor biosynthesis; (R)-pantothenate biosynthesis; (R)-pantoate from 3-methyl-2-oxobutanoate: step 1/2. In terms of biological role, catalyzes the reversible reaction in which hydroxymethyl group from 5,10-methylenetetrahydrofolate is transferred onto alpha-ketoisovalerate to form ketopantoate. This is 3-methyl-2-oxobutanoate hydroxymethyltransferase from Syntrophobacter fumaroxidans (strain DSM 10017 / MPOB).